The sequence spans 174 residues: Gamma-crystallin M3 (174 aa).

2 Beta/gamma crystallin 'Greek key' domains span residues 2 to 40 and 41 to 82; these read GKII…RVES and GCFV…RMVP. A connecting peptide region spans residues 83–87; that stretch reads QYRGP. 2 consecutive Beta/gamma crystallin 'Greek key' domains span residues 88-128 and 129-171; these read YRMR…HVMD and GHWL…RRIM.

Belongs to the beta/gamma-crystallin family. In terms of assembly, monomer.

Functionally, crystallins are the dominant structural components of the vertebrate eye lens. The sequence is that of Gamma-crystallin M3 from Cyprinus carpio (Common carp).